The sequence spans 242 residues: Ferritin, mitochondrial (242 aa).

The N-terminal 49 residues, 1-49 (MLPCSLFLPKHISTSLVFLRSARHGFALLPRWVPRLSSDYPPAAPIRLL), are a transit peptide targeting the mitochondrion. In terms of domain architecture, Ferritin-like diiron spans 70–219 (QNFHPDSEAA…DHVNNLVKMG (150 aa)). The Fe cation site is built by E87, E122, H125, E167, and Q201.

The protein belongs to the ferritin family. Homooligomer of 24 subunits. The functional molecule is roughly spherical and contains a central cavity into which the polymeric mineral iron core is deposited.

It localises to the mitochondrion. The catalysed reaction is 4 Fe(2+) + O2 + 4 H(+) = 4 Fe(3+) + 2 H2O. Its function is as follows. Catalyzes the oxidation of ferrous iron(II) to ferric iron(III) and stores iron in a soluble, non-toxic, readily available form. Important for iron homeostasis. Iron is taken up in the ferrous form and deposited as ferric hydroxides after oxidation. The polypeptide is Ferritin, mitochondrial (Bos taurus (Bovine)).